Consider the following 283-residue polypeptide: Cardiolipin synthase (CMP-forming) (283 aa).

The next 3 membrane-spanning stretches (helical) occupy residues 83 to 103, 155 to 175, and 209 to 229; these read PFIG…LFAF, VSIA…ALFI, and LSKW…LLLL.

The protein belongs to the CDP-alcohol phosphatidyltransferase class-I family. As to quaternary structure, may be found in a large complex. The cofactor is Mg(2+).

The protein resides in the mitochondrion inner membrane. It carries out the reaction a CDP-1,2-diacyl-sn-glycerol + a 1,2-diacyl-sn-glycero-3-phospho-(1'-sn-glycerol) = a cardiolipin + CMP + H(+). Functionally, catalyzes the synthesis of cardiolipin (CL) (diphosphatidylglycerol) by specifically transferring a phosphatidyl group from CDP-diacylglycerol to phosphatidylglycerol (PG). CL is a key phospholipid in mitochondrial membranes and plays important roles in maintaining the functional integrity and dynamics of mitochondria under both optimal and stress conditions. This is Cardiolipin synthase (CMP-forming) (CRD1) from Saccharomyces cerevisiae (strain ATCC 204508 / S288c) (Baker's yeast).